Reading from the N-terminus, the 309-residue chain is Olfactory receptor 10J5 (309 aa).

The Extracellular segment spans residues Met1–Ile25. N-linked (GlcNAc...) asparagine glycosylation is present at Asn5. A helical transmembrane segment spans residues Thr26 to Val46. Topologically, residues Thr47–His54 are cytoplasmic. A helical membrane pass occupies residues Leu55–Leu75. At Val76 to Thr99 the chain is on the extracellular side. A disulfide bridge links Cys97 with Cys188. Residues Gln100 to Tyr120 traverse the membrane as a helical segment. The Cytoplasmic portion of the chain corresponds to Asp121 to Gly139. The chain crosses the membrane as a helical span at residues Leu140–Val160. Topologically, residues Thr161 to Ile196 are extracellular. The helical transmembrane segment at Ile197–Ser216 threads the bilayer. At Tyr217–Thr236 the chain is on the cytoplasmic side. A helical transmembrane segment spans residues Phe237–Ala257. Residues Tyr258–Asp270 lie on the Extracellular side of the membrane. The chain crosses the membrane as a helical span at residues Leu271 to Leu291. Over Arg292 to Ser309 the chain is Cytoplasmic.

This sequence belongs to the G-protein coupled receptor 1 family. In terms of tissue distribution, expressed in both the aorta, the coronary artery and umbilical vein endothelial cells (HUVECs) (at protein level).

Its subcellular location is the cell membrane. In terms of biological role, olfactory receptor. Activated by the synthetic floral odorant, lyral, and by alpha-cedrene, a sesquiterpene constituent of cedarwood oil. Its activation increases intracellular Ca(2+). Acts as a key regulator of myogenesis through its actions on cell migration and adhesion by activating the Ca(2+)-dependent AKT signal transduction pathway. Also acts as a regulator of angiogenesis. Moreover, plays a role in the regulation of lipid accumulation in hepatocytes via the cAMP-PKA pathway. May be involved in sperm chemotaxis and motility. The sequence is that of Olfactory receptor 10J5 from Homo sapiens (Human).